The chain runs to 619 residues: MALLQIAEPGQSPQPHQRRLAVGIDLGTTNSLVATLRSGLAESLKTPRGNDPASAVRYLPDGRRVGRAAKAAAAVDPLNTVLSVKRLMGRGIADVKLLGEQLPYRFAEGESHMPFIETVQGPKSPVEVSAEILRVLRRRAEEALGGELVGAVITVPAYFDEAQRQATKDAARLAGLDVLRLLNEPTAAAVAYGLDRGAEGVVAIYDLGGGTFDISILRLTRGVFEVLATGGDSALGGDDFDHAIANWIVEQAGLSADLDPGVQRHLLQLACAAKEALSDSGSVTLAYGPWQGELSRERFEALIEPLVARSLKACRRALRDAGIEPQEIAAVVMVGGSTRVPRVRRAAAELFDRQPLTDIDPDQVVAIGAALQADTLAGNGRDGEELLLLDVNPLSLGLETMGRLMEKVIPRNTTLPVARAQEFTTYKDGQTAMLIHVLQGERELVKDCRSLARFELRGIPPMVAGAAKIRVTFQVDADGLLNVSARELGSGYEASVQVKPSYGLTDGEIARMLKDSFEYAGGDKAARALREQQVEAQRLLEAVQAALEADGEALLSPAERAAIEAQMQALRGVLDGPDAAVIETHVRHLTQVTDAFAARRLDASVKAALSGRRLNEIEE.

This sequence belongs to the heat shock protein 70 family.

Chaperone involved in the maturation of iron-sulfur cluster-containing proteins. Has a low intrinsic ATPase activity which is markedly stimulated by HscB. This is Chaperone protein HscA homolog from Azotobacter vinelandii.